A 310-amino-acid chain; its full sequence is Calcium homeostasis modulator protein 5 (310 aa).

4 consecutive transmembrane segments (helical) span residues 17–37 (TIGYSVMAILTIGSERIFSMV), 49–69 (FPYGICFLLGPAVVLLVVGFF), 101–121 (LIKVLYGACVAPVMWLTVALL), and 181–201 (QILGWSVIITAVVIALIGTCY).

The protein belongs to the CALHM family.

It is found in the membrane. Functionally, pore-forming subunit of a voltage-gated ion channel. This Danio rerio (Zebrafish) protein is Calcium homeostasis modulator protein 5 (calhm5.1).